The sequence spans 957 residues: MTQTLSQLENSGAFIERHIGPDAAQQQEMLNAVGAQSLNALTGQIVPKDIQLATPPQVGAPATEYAALAELKAIASRNKRFTSYIGMGYTAVQLPPVILRNMLENPGWYTAYTPYQPEVSQGRLEALLNFQQVTLDLTGLDMASASLLDEATAAAEAMAMAKRVSKLKNANRFFVASDVHPQTLDVVRTRAETFGFEVIVDDAQKVLDHQDVFGVLLQQVGTTGEIHDYTALISELKSRKIVVSVAADIMALVLLTAPGKQGADIVFGSAQRFGVPMGYGGPHAAFFAAKDEYKRSMPGRIIGVSKDAAGNTALRMAMQTREQHIRREKANSNICTSQVLLANIASLYAVYHGPVGLKRIANRIHRLTDILAAGLQQKGLKLRHAHYFDTLCVEVVDKAGVLARAEAAEINLRSDILNAVGITLDETTTRENVMQLFSVLLGDNHGLDIDTLDKDVAHDSRSIQAAMLRDDEILTHPVFNRYHSETEMMRYMHSLERKDLALNQAMIPLGSCTMKLNAAAEMIPITWPEFAELHPFCPPEQAEGYQQMIAQLADWLVKLTGYDAVCMQPNSGAQGEYAGLLAIRHYHESRNEGHRDICLIPASAHGTNPASAHMAGMQVVVVACDKNGNIDLTDLRAKAEQAGDNLSCIMVTYPSTHGVYEETIREVCEVVHQFGGQVYLDGANMNAQVGITSPGFIGADVSHLNLHKTFCIPHGGGGPGMGPIGVKAHLAPFVPGHSVVQIEGMLTRQGAVSAAPFGSASILPISWMYIRMMGAEGLKKASQVAILNANYIASRLQDAFPVLYTGRDGRVAHECILDIRPLKEETGISELDIAKRLIDYGFHAPTMSFPVAGTLMVEPTESESKVELDRFIDAMLAIRAEIDQVKAGVWPLEDNPLVNAPHIQSELVAEWAHPYSREVAVFPAGVADKYWPTVKRLDDVYGDRNLFCSCVPISEYQ.

The residue at position 708 (Lys708) is an N6-(pyridoxal phosphate)lysine.

The protein belongs to the GcvP family. As to quaternary structure, the glycine cleavage system is composed of four proteins: P, T, L and H. It depends on pyridoxal 5'-phosphate as a cofactor.

It catalyses the reaction N(6)-[(R)-lipoyl]-L-lysyl-[glycine-cleavage complex H protein] + glycine + H(+) = N(6)-[(R)-S(8)-aminomethyldihydrolipoyl]-L-lysyl-[glycine-cleavage complex H protein] + CO2. Its function is as follows. The glycine cleavage system catalyzes the degradation of glycine. The P protein binds the alpha-amino group of glycine through its pyridoxal phosphate cofactor; CO(2) is released and the remaining methylamine moiety is then transferred to the lipoamide cofactor of the H protein. This chain is Glycine dehydrogenase (decarboxylating), found in Escherichia coli (strain UTI89 / UPEC).